We begin with the raw amino-acid sequence, 89 residues long: Mu-like prophage FluMu DNA-binding protein Ner (89 aa).

The segment at residues 57–76 (ERLVANAIGVPPEVIWAGRF) is a DNA-binding region (H-T-H motif).

It belongs to the ner transcriptional regulatory family.

Its function is as follows. Negative regulator of transcription starting from the Pe and Pc promoters of Mu. Also negatively regulates its own gene transcription. The chain is Mu-like prophage FluMu DNA-binding protein Ner (nlp) from Haemophilus influenzae (strain ATCC 51907 / DSM 11121 / KW20 / Rd).